The chain runs to 218 residues: Small ribosomal subunit protein uS5 (218 aa).

In terms of domain architecture, S5 DRBM spans 55-118 (LDHEVIDVSI…RNAKLNIIPV (64 aa)).

This sequence belongs to the universal ribosomal protein uS5 family. In terms of assembly, part of the 30S ribosomal subunit. Contacts protein S4.

Its function is as follows. With S4 and S12 plays an important role in translational accuracy. This is Small ribosomal subunit protein uS5 from Aeropyrum pernix (strain ATCC 700893 / DSM 11879 / JCM 9820 / NBRC 100138 / K1).